Consider the following 60-residue polypeptide: Short neurotoxin 1 (60 aa).

4 cysteine pairs are disulfide-bonded: C3/C22, C17/C39, C41/C52, and C53/C58.

It belongs to the three-finger toxin family. Short-chain subfamily. Type I alpha-neurotoxin sub-subfamily. In terms of tissue distribution, expressed by the venom gland.

The protein localises to the secreted. Its function is as follows. Binds to muscle nicotinic acetylcholine receptor (nAChR) and inhibit acetylcholine from binding to the receptor, thereby impairing neuromuscular transmission. The polypeptide is Short neurotoxin 1 (Hydrophis schistosus (Beaked sea snake)).